The chain runs to 113 residues: uncharacterized protein (113 aa).

The N-terminal stretch at 1–16 (MKCLVVLTALFGISTA) is a signal peptide. Residues 81 to 101 (GGNGGNGGGGNGGNNGNGNGN) are compositionally biased toward gly residues. Residues 81 to 103 (GGNGGNGGGGNGGNNGNGNGNNG) form a disordered region.

In terms of tissue distribution, nacreous layer of shell (at protein level).

Its subcellular location is the secreted. This is an uncharacterized protein from Margaritifera margaritifera (Freshwater pearl mussel).